Here is a 561-residue protein sequence, read N- to C-terminus: Probable xyloglucan galactosyltransferase GT20 (561 aa).

Over Met1–Thr31 the chain is Cytoplasmic. The helical; Signal-anchor for type II membrane protein transmembrane segment at Leu32–Ile52 threads the bilayer. Residues Ser53 to Val561 are Lumenal-facing. Asn87, Asn253, Asn277, Asn418, Asn421, and Asn557 each carry an N-linked (GlcNAc...) asparagine glycan.

Belongs to the glycosyltransferase 47 family. In terms of tissue distribution, expressed in hydathodes.

It is found in the golgi apparatus membrane. In terms of biological role, functions in xyloglucan synthesis by adding side chains to the xylosylated glucan backbone. Involved in the galactosylation of hemicellulose xyloglucan. This is Probable xyloglucan galactosyltransferase GT20 from Arabidopsis thaliana (Mouse-ear cress).